The chain runs to 353 residues: Ribosomal RNA small subunit methyltransferase H (353 aa).

S-adenosyl-L-methionine is bound by residues 50–52 (GGY), Asp69, Phe96, Asp117, and Gln124. Positions 276–353 (AAQASRHVPG…PAPQGRGPRR (78 aa)) are disordered.

The protein belongs to the methyltransferase superfamily. RsmH family.

Its subcellular location is the cytoplasm. It carries out the reaction cytidine(1402) in 16S rRNA + S-adenosyl-L-methionine = N(4)-methylcytidine(1402) in 16S rRNA + S-adenosyl-L-homocysteine + H(+). In terms of biological role, specifically methylates the N4 position of cytidine in position 1402 (C1402) of 16S rRNA. The sequence is that of Ribosomal RNA small subunit methyltransferase H from Methylorubrum extorquens (strain CM4 / NCIMB 13688) (Methylobacterium extorquens).